A 452-amino-acid polypeptide reads, in one-letter code: Bifunctional protein GlmU (452 aa).

Residues 1-225 (MEVVILAAGQ…VSETLGVNSK (225 aa)) form a pyrophosphorylase region. UDP-N-acetyl-alpha-D-glucosamine contacts are provided by residues 6–9 (LAAG), Lys20, Gln71, 76–77 (GT), 98–100 (YGD), Gly135, Glu150, Asn165, and Asn223. Mg(2+) is bound at residue Asp100. Position 223 (Asn223) interacts with Mg(2+). Positions 226 to 246 (PQLAELERIHQRNIAQRLMED) are linker. Residues 247–452 (GVTLIDPARI…AGWKRPVKQR (206 aa)) are N-acetyltransferase. The UDP-N-acetyl-alpha-D-glucosamine site is built by Arg329 and Lys347. His359 functions as the Proton acceptor in the catalytic mechanism. Tyr362 and Asn373 together coordinate UDP-N-acetyl-alpha-D-glucosamine. Residues Ala376, 382–383 (NY), Ser401, Ala419, and Arg436 contribute to the acetyl-CoA site.

This sequence in the N-terminal section; belongs to the N-acetylglucosamine-1-phosphate uridyltransferase family. The protein in the C-terminal section; belongs to the transferase hexapeptide repeat family. As to quaternary structure, homotrimer. Requires Mg(2+) as cofactor.

It localises to the cytoplasm. It catalyses the reaction alpha-D-glucosamine 1-phosphate + acetyl-CoA = N-acetyl-alpha-D-glucosamine 1-phosphate + CoA + H(+). It carries out the reaction N-acetyl-alpha-D-glucosamine 1-phosphate + UTP + H(+) = UDP-N-acetyl-alpha-D-glucosamine + diphosphate. Its pathway is nucleotide-sugar biosynthesis; UDP-N-acetyl-alpha-D-glucosamine biosynthesis; N-acetyl-alpha-D-glucosamine 1-phosphate from alpha-D-glucosamine 6-phosphate (route II): step 2/2. It participates in nucleotide-sugar biosynthesis; UDP-N-acetyl-alpha-D-glucosamine biosynthesis; UDP-N-acetyl-alpha-D-glucosamine from N-acetyl-alpha-D-glucosamine 1-phosphate: step 1/1. It functions in the pathway bacterial outer membrane biogenesis; LPS lipid A biosynthesis. Functionally, catalyzes the last two sequential reactions in the de novo biosynthetic pathway for UDP-N-acetylglucosamine (UDP-GlcNAc). The C-terminal domain catalyzes the transfer of acetyl group from acetyl coenzyme A to glucosamine-1-phosphate (GlcN-1-P) to produce N-acetylglucosamine-1-phosphate (GlcNAc-1-P), which is converted into UDP-GlcNAc by the transfer of uridine 5-monophosphate (from uridine 5-triphosphate), a reaction catalyzed by the N-terminal domain. The polypeptide is Bifunctional protein GlmU (Azoarcus sp. (strain BH72)).